Reading from the N-terminus, the 263-residue chain is MNLREKYGEWGLILGATEGVGKAFCEKIAAGGMNVVMVGRREEKLNVLAGEIRETYGVETKVVRADFSQPGAAETVFAATEGLDMGFMSYVACLHSFGKIQDTPWEKHEAMINVNVVTFLKCFHHYMRIFAAQDRGAVINVSSMTGISSSPWNGQYGAGKAFILKMTEAVACECEGTGVDVEVITLGTTLTPSLLSNLPGGPQGEAVMKIALTPEECVDEAFEKLGKELSVIAGQRNKDSVHDWKANHTEDEYIRYMGSFYRD.

NADP(+) is bound by residues 17–21 (TEGVG), 40–41 (RR), and 66–67 (DF). Catalysis depends on Y156, which acts as the Proton acceptor. An NADP(+)-binding site is contributed by S240.

Belongs to the short-chain dehydrogenases/reductases (SDR) family. Homodimer.

The enzyme catalyses a 7beta-hydroxysteroid + NADP(+) = a 7-oxosteroid + NADPH + H(+). It carries out the reaction 7-oxolithocholate + NADPH + H(+) = ursodeoxycholate + NADP(+). It catalyses the reaction 7beta-hydroxy-3,12-dioxo-5beta-cholan-24-oate + NADP(+) = dehydrocholate + NADPH + H(+). The catalysed reaction is ursocholate + NADP(+) = 3alpha,12alpha-dihydroxy-7-oxo-5beta-cholanate + NADPH + H(+). Functionally, 7beta-hydroxysteroid dehydrogenase that catalyzes the reduction of the 7-oxo group of 7-oxo-lithocholate (7-oxo-LCA), to yield ursodeoxycholate (UDCA). As C.aerofaciens is an intestinal bacterium, this enzyme probably contributes to the formation of UDCA in the human colon. UDCA is regarded as a chemopreventive beneficial secondary bile acid due to its low hydrophobicity; it protects hepatocytes and bile duct epithelial cells against necrosis and apoptosis induced by more hydrophobic secondary bile acids like deoxycholate (DCA). This enzyme is also able to catalyze the reverse reaction, i.e. the oxidation of the 7beta-hydroxy group of UDCA to 7-oxo-LCA. To a lesser extent, is also active on the taurine- and glycine-conjugates of ursodeoxycholate. It is specific for NADPH/NADP(+) as the electron acceptor/donor since it is not active with NADH/NAD(+). In the presence of NADPH, 7beta-HSDH can also reduce dehydrocholate. And is also able to oxidize ursocholate. The polypeptide is 7beta-hydroxysteroid dehydrogenase (Collinsella aerofaciens (strain ATCC 25986 / DSM 3979 / JCM 10188 / KCTC 3647 / NCTC 11838 / VPI 1003)).